The following is a 352-amino-acid chain: N-acetyl-gamma-glutamyl-phosphate reductase (352 aa).

Cysteine 155 is an active-site residue.

This sequence belongs to the NAGSA dehydrogenase family. Type 1 subfamily.

Its subcellular location is the cytoplasm. The enzyme catalyses N-acetyl-L-glutamate 5-semialdehyde + phosphate + NADP(+) = N-acetyl-L-glutamyl 5-phosphate + NADPH + H(+). The protein operates within amino-acid biosynthesis; L-arginine biosynthesis; N(2)-acetyl-L-ornithine from L-glutamate: step 3/4. Functionally, catalyzes the NADPH-dependent reduction of N-acetyl-5-glutamyl phosphate to yield N-acetyl-L-glutamate 5-semialdehyde. The chain is N-acetyl-gamma-glutamyl-phosphate reductase from Acaryochloris marina (strain MBIC 11017).